The primary structure comprises 510 residues: D-alanine--D-alanyl carrier protein ligase (510 aa).

An ATP-binding site is contributed by 157-158 (TS). Residue aspartate 202 coordinates D-alanine. ATP is bound at residue 297-302 (NTYGPT). Valine 306 provides a ligand contact to D-alanine. Aspartate 389 and lysine 498 together coordinate ATP. A D-alanine-binding site is contributed by lysine 498.

Belongs to the ATP-dependent AMP-binding enzyme family. DltA subfamily.

It localises to the cytoplasm. It carries out the reaction holo-[D-alanyl-carrier protein] + D-alanine + ATP = D-alanyl-[D-alanyl-carrier protein] + AMP + diphosphate. Its pathway is cell wall biogenesis; lipoteichoic acid biosynthesis. Catalyzes the first step in the D-alanylation of lipoteichoic acid (LTA), the activation of D-alanine and its transfer onto the D-alanyl carrier protein (Dcp) DltC. In an ATP-dependent two-step reaction, forms a high energy D-alanyl-AMP intermediate, followed by transfer of the D-alanyl residue as a thiol ester to the phosphopantheinyl prosthetic group of the Dcp. D-alanylation of LTA plays an important role in modulating the properties of the cell wall in Gram-positive bacteria, influencing the net charge of the cell wall. This Listeria monocytogenes serovar 1/2a (strain ATCC BAA-679 / EGD-e) protein is D-alanine--D-alanyl carrier protein ligase.